We begin with the raw amino-acid sequence, 127 residues long: Probable 4-amino-4-deoxy-L-arabinose-phosphoundecaprenol flippase subunit ArnF (127 aa).

Residues 1 to 21 (MMGYFWALMSVLLVSGAQLMM) form a helical membrane-spanning segment. Over 22–48 (KWAMVSLPPVGQTDALMSAFMSVTPGA) the chain is Periplasmic. Residues 49-69 (VALVIGLFAYVFSMGCWYMAL) form a helical membrane-spanning segment. Residues 70 to 77 (RRIALSKA) lie on the Cytoplasmic side of the membrane. Residues 78-98 (YPLLSLSYVLVWAAAIGLPWL) form a helical membrane-spanning segment. The Periplasmic portion of the chain corresponds to 99–101 (HEP). A helical transmembrane segment spans residues 102–122 (FSVGKLAGVSVIFVGLLLVCL). Residues 123–127 (PDKKS) lie on the Cytoplasmic side of the membrane.

The protein belongs to the ArnF family. In terms of assembly, heterodimer of ArnE and ArnF.

It localises to the cell inner membrane. It participates in bacterial outer membrane biogenesis; lipopolysaccharide biosynthesis. In terms of biological role, translocates 4-amino-4-deoxy-L-arabinose-phosphoundecaprenol (alpha-L-Ara4N-phosphoundecaprenol) from the cytoplasmic to the periplasmic side of the inner membrane. The chain is Probable 4-amino-4-deoxy-L-arabinose-phosphoundecaprenol flippase subunit ArnF from Enterobacter sp. (strain 638).